We begin with the raw amino-acid sequence, 154 residues long: MPKTDVSGLSMLGNQTETAANPEVAVLEKVPAGYAGTDYVVRFTAPEFTSLCPMTGQPDFAHIVIDYVPNEWLVESKSLKLFLHSFRNHGAFHEDCSIYIAKRLVELLEPKWLRIGAYWYPRGGIPIDVFWQTGKPPEGVWLPDQGVQPYRGRG.

The Thioimide intermediate role is filled by cysteine 52. Aspartate 59 serves as the catalytic Proton donor. Residues 74–76 and 93–94 each bind substrate; these read VES and HE.

Belongs to the GTP cyclohydrolase I family. QueF type 1 subfamily.

It localises to the cytoplasm. It catalyses the reaction 7-aminomethyl-7-carbaguanine + 2 NADP(+) = 7-cyano-7-deazaguanine + 2 NADPH + 3 H(+). Its pathway is tRNA modification; tRNA-queuosine biosynthesis. In terms of biological role, catalyzes the NADPH-dependent reduction of 7-cyano-7-deazaguanine (preQ0) to 7-aminomethyl-7-deazaguanine (preQ1). This chain is NADPH-dependent 7-cyano-7-deazaguanine reductase, found in Rhizobium rhizogenes (strain K84 / ATCC BAA-868) (Agrobacterium radiobacter).